The sequence spans 580 residues: CRISPR-associated exonuclease Cas4/endonuclease Cas1 fusion (580 aa).

A CRISPR-associated exonuclease Cas4 region spans residues 1 to 223; the sequence is MAPSDTPPSA…RCSLLPICLP (223 aa). Position 44 (Cys-44) interacts with [4Fe-4S] cluster. The Mn(2+) site is built by Asp-112 and Glu-125. The [4Fe-4S] cluster site is built by Cys-212, Cys-215, and Cys-221. Residues 248–580 form a CRISPR-associated endonuclease Cas1 region; the sequence is LYGQTPGARI…IPRYPHYCPR (333 aa). Positions 401, 472, and 487 each coordinate Mn(2+).

The protein in the N-terminal section; belongs to the CRISPR-associated exonuclease Cas4 family. It in the C-terminal section; belongs to the CRISPR-associated endonuclease Cas1 family. As to quaternary structure, homodimer, forms a heterotetramer with a Cas2 homodimer. Requires [4Fe-4S] cluster as cofactor. The cofactor is Mg(2+). Mn(2+) serves as cofactor.

The enzyme catalyses exonucleolytic cleavage in the 5'- to 3'-direction to yield nucleoside 3'-phosphates.. CRISPR (clustered regularly interspaced short palindromic repeat), is an adaptive immune system that provides protection against mobile genetic elements (viruses, transposable elements and conjugative plasmids). CRISPR clusters contain spacers, sequences complementary to antecedent mobile elements, and target invading nucleic acids. CRISPR clusters are transcribed and processed into CRISPR RNA (crRNA). The Cas4 region acts as a ssDNA exonuclease, while the Cas1 region acts as a dsDNA endonuclease. Involved in the integration of spacer DNA into the CRISPR cassette. This is CRISPR-associated exonuclease Cas4/endonuclease Cas1 fusion (cas4-cas1) from Rhodospirillum rubrum (strain ATCC 11170 / ATH 1.1.1 / DSM 467 / LMG 4362 / NCIMB 8255 / S1).